A 476-amino-acid chain; its full sequence is Flavin-dependent halogenase otaD (476 aa).

Residues Gly-14 and Gly-17 each contribute to the FAD site. Residues Ser-304 and Gly-305 each contribute to the chloride site. FAD is bound at residue Val-306.

The protein belongs to the flavin-dependent halogenase family.

The catalysed reaction is ochratoxin B + FADH2 + chloride + O2 = ochratoxin A + FAD + 2 H2O. The protein operates within mycotoxin biosynthesis. Functionally, flavin-dependent halogenase; part of the gene cluster that mediates the biosynthesis of ochratoxin A (OTA), a mycotoxin composed of a chlorinated type I polyketide dihydroisocoumarin moiety linked to L-phenylalanine, and demonstrated to have nephrotoxic, immunotoxic, genotoxic, neurotoxic, and teratogenic properties. OtaD chlorinates ochratoxin B (OTB) at the C-5 position to form OTA. The pathway begins with the highly reducing polyketide synthase otaA that catalyzes the formation of the isocoumarin group during the initial stages of biosynthesis, starting from one acetate and 4 malonate units, to originate the characteristic pentaketide skeleton 7-methylmellein (7-MM) of the OTA molecule. The newly identified cyclase otaY might be involved in the polyketide cyclization reaction during the initial steps of the OTA biosynthesis. 7-MM is then oxidized into 7-carboxymellein (also called ochratoxin beta) by the cytochrome P450 monooxygenase otaC. The NRPS encoded by the otaB gene is involved in the linking of phenylalanine to the dihydroisocoumarin ring. The reaction catalyzed by NRPS results in the production of ochratoxin B (OTB), which is the non-chlorinated analog of OTA and which subsequently serves as the substrate of the halogenase otaD for chlorination activity to form the final molecular structure of OTA, containing a chlorine atom in the C-5 position of the molecule. This chain is Flavin-dependent halogenase otaD, found in Aspergillus niger (strain ATCC MYA-4892 / CBS 513.88 / FGSC A1513).